A 147-amino-acid polypeptide reads, in one-letter code: Cytochrome c-type biogenesis protein CcmE (147 aa).

Residues Met1–Arg9 lie on the Cytoplasmic side of the membrane. A helical; Signal-anchor for type II membrane protein membrane pass occupies residues Ile10–Gly30. The Periplasmic portion of the chain corresponds to Phe31–Ser147. Heme is bound by residues His123 and Tyr127.

Belongs to the CcmE/CycJ family.

The protein localises to the cell inner membrane. Functionally, heme chaperone required for the biogenesis of c-type cytochromes. Transiently binds heme delivered by CcmC and transfers the heme to apo-cytochromes in a process facilitated by CcmF and CcmH. This Paracoccus denitrificans (strain Pd 1222) protein is Cytochrome c-type biogenesis protein CcmE.